The primary structure comprises 441 residues: Proline--tRNA ligase (441 aa).

Belongs to the class-II aminoacyl-tRNA synthetase family. ProS type 2 subfamily. In terms of assembly, homodimer.

The protein resides in the cytoplasm. It catalyses the reaction tRNA(Pro) + L-proline + ATP = L-prolyl-tRNA(Pro) + AMP + diphosphate. Functionally, catalyzes the attachment of proline to tRNA(Pro) in a two-step reaction: proline is first activated by ATP to form Pro-AMP and then transferred to the acceptor end of tRNA(Pro). In Methylobacterium radiotolerans (strain ATCC 27329 / DSM 1819 / JCM 2831 / NBRC 15690 / NCIMB 10815 / 0-1), this protein is Proline--tRNA ligase.